A 682-amino-acid polypeptide reads, in one-letter code: DNA ligase (682 aa).

NAD(+) is bound by residues 42 to 46 (DAEYD), 91 to 92 (SL), and E124. Catalysis depends on K126, which acts as the N6-AMP-lysine intermediate. NAD(+) contacts are provided by R147, E184, K302, and K326. Zn(2+) is bound by residues C420, C423, C438, and C444. A BRCT domain is found at 603–682 (IADNPLKGKS…QEFIALTGEN (80 aa)).

The protein belongs to the NAD-dependent DNA ligase family. LigA subfamily. The cofactor is Mg(2+). Requires Mn(2+) as cofactor.

The enzyme catalyses NAD(+) + (deoxyribonucleotide)n-3'-hydroxyl + 5'-phospho-(deoxyribonucleotide)m = (deoxyribonucleotide)n+m + AMP + beta-nicotinamide D-nucleotide.. DNA ligase that catalyzes the formation of phosphodiester linkages between 5'-phosphoryl and 3'-hydroxyl groups in double-stranded DNA using NAD as a coenzyme and as the energy source for the reaction. It is essential for DNA replication and repair of damaged DNA. In Actinobacillus pleuropneumoniae serotype 3 (strain JL03), this protein is DNA ligase.